The chain runs to 155 residues: Small ribosomal subunit protein uS9 (155 aa).

The protein belongs to the universal ribosomal protein uS9 family.

The protein is Small ribosomal subunit protein uS9 of Sinorhizobium medicae (strain WSM419) (Ensifer medicae).